The following is a 363-amino-acid chain: Trans-2,3-enoyl-CoA reductase-like (363 aa).

Phosphoserine is present on S37. Helical transmembrane passes span 143–163 (WTTVFLAEYTGPLLIYLLFYL), 217–237 (LIMSCAFYWGFTSWIAYYINH), and 311–331 (ISFTVMTQTLPVGIFTLLMSI).

It belongs to the steroid 5-alpha reductase family. In terms of tissue distribution, predominantly expressed in the heart and skeletal muscle.

It is found in the membrane. The protein localises to the endoplasmic reticulum. The protein is Trans-2,3-enoyl-CoA reductase-like (TECRL) of Homo sapiens (Human).